The chain runs to 799 residues: Protein translocase subunit SecA 1 (799 aa).

Residues Gln85, 103-107, and Asp504 contribute to the ATP site; that span reads GEGKT.

The protein belongs to the SecA family. Monomer and homodimer. Part of the essential Sec protein translocation apparatus which comprises SecA, SecYEG and auxiliary proteins SecDF. Other proteins may also be involved.

It localises to the cell membrane. It is found in the cytoplasm. The catalysed reaction is ATP + H2O + cellular proteinSide 1 = ADP + phosphate + cellular proteinSide 2.. Its function is as follows. Part of the Sec protein translocase complex. Interacts with the SecYEG preprotein conducting channel. Has a central role in coupling the hydrolysis of ATP to the transfer of proteins into and across the cell membrane, serving as an ATP-driven molecular motor driving the stepwise translocation of polypeptide chains across the membrane. This chain is Protein translocase subunit SecA 1, found in Lactobacillus johnsonii (strain CNCM I-12250 / La1 / NCC 533).